The chain runs to 198 residues: Dephospho-CoA kinase (198 aa).

One can recognise a DPCK domain in the interval 2–90 (LIAIVGKPGV…KLSLVTKPLL (89 aa)). 10–15 (GVGKTS) contributes to the ATP binding site.

The protein belongs to the CoaE family.

It localises to the cytoplasm. The enzyme catalyses 3'-dephospho-CoA + ATP = ADP + CoA + H(+). It functions in the pathway cofactor biosynthesis; coenzyme A biosynthesis; CoA from (R)-pantothenate: step 5/5. Catalyzes the phosphorylation of the 3'-hydroxyl group of dephosphocoenzyme A to form coenzyme A. This is Dephospho-CoA kinase from Mycoplasma genitalium (strain ATCC 33530 / DSM 19775 / NCTC 10195 / G37) (Mycoplasmoides genitalium).